The following is a 427-amino-acid chain: UDP-N-acetylglucosamine 1-carboxyvinyltransferase 1 (427 aa).

23 to 24 lines the phosphoenolpyruvate pocket; it reads KN. Arg96 contacts UDP-N-acetyl-alpha-D-glucosamine. The Proton donor role is filled by Cys120. Cys120 carries the 2-(S-cysteinyl)pyruvic acid O-phosphothioketal modification. Residues 125–129, Asp309, and Val331 each bind UDP-N-acetyl-alpha-D-glucosamine; that span reads RPIDL.

It belongs to the EPSP synthase family. MurA subfamily.

It localises to the cytoplasm. It carries out the reaction phosphoenolpyruvate + UDP-N-acetyl-alpha-D-glucosamine = UDP-N-acetyl-3-O-(1-carboxyvinyl)-alpha-D-glucosamine + phosphate. It participates in cell wall biogenesis; peptidoglycan biosynthesis. Cell wall formation. Adds enolpyruvyl to UDP-N-acetylglucosamine. This Streptococcus pneumoniae serotype 4 (strain ATCC BAA-334 / TIGR4) protein is UDP-N-acetylglucosamine 1-carboxyvinyltransferase 1.